Here is a 248-residue protein sequence, read N- to C-terminus: ATP synthase subunit a, chloroplastic (248 aa).

5 helical membrane-spanning segments follow: residues 38–58 (QVLL…VLTV), 96–116 (VPFI…GALV), 135–155 (INTT…AGLA), 200–220 (LVVA…VMLL), and 221–241 (GLFT…AYIG).

It belongs to the ATPase A chain family. F-type ATPases have 2 components, CF(1) - the catalytic core - and CF(0) - the membrane proton channel. CF(1) has five subunits: alpha(3), beta(3), gamma(1), delta(1), epsilon(1). CF(0) has four main subunits: a, b, b' and c.

The protein resides in the plastid. Its subcellular location is the chloroplast thylakoid membrane. Functionally, key component of the proton channel; it plays a direct role in the translocation of protons across the membrane. The sequence is that of ATP synthase subunit a, chloroplastic from Welwitschia mirabilis (Tree tumbo).